The chain runs to 275 residues: Cytochrome c oxidase subunit 3 (275 aa).

A run of 7 helical transmembrane segments spans residues 22–42 (PWPLLTSFALLILTSAAVMYF), 52–72 (SGALLVGIGLATTVAAMALWF), 96–116 (GVALFIISEVFFFISVFWAFF), 132–152 (PVGIATINPFELPLLNTILLL), 173–193 (AILGTLMTLIFAVLFTICQGI), 211–231 (FFFSTGFHGVHVIIGTLFIAV), and 253–273 (ILYWHFVDVVWLFLFISVYWW).

It belongs to the cytochrome c oxidase subunit 3 family. As to quaternary structure, component of the cytochrome c oxidase (complex IV, CIV), a multisubunit enzyme composed of a catalytic core of 3 subunits and several supernumerary subunits. The complex exists as a monomer or a dimer and forms supercomplexes (SCs) in the inner mitochondrial membrane with ubiquinol-cytochrome c oxidoreductase (cytochrome b-c1 complex, complex III, CIII).

It is found in the mitochondrion inner membrane. The enzyme catalyses 4 Fe(II)-[cytochrome c] + O2 + 8 H(+)(in) = 4 Fe(III)-[cytochrome c] + 2 H2O + 4 H(+)(out). In terms of biological role, component of the cytochrome c oxidase, the last enzyme in the mitochondrial electron transport chain which drives oxidative phosphorylation. The respiratory chain contains 3 multisubunit complexes succinate dehydrogenase (complex II, CII), ubiquinol-cytochrome c oxidoreductase (cytochrome b-c1 complex, complex III, CIII) and cytochrome c oxidase (complex IV, CIV), that cooperate to transfer electrons derived from NADH and succinate to molecular oxygen, creating an electrochemical gradient over the inner membrane that drives transmembrane transport and the ATP synthase. Cytochrome c oxidase is the component of the respiratory chain that catalyzes the reduction of oxygen to water. Electrons originating from reduced cytochrome c in the intermembrane space (IMS) are transferred via the dinuclear copper A center (CU(A)) of subunit 2 and heme A of subunit 1 to the active site in subunit 1, a binuclear center (BNC) formed by heme A3 and copper B (CU(B)). The BNC reduces molecular oxygen to 2 water molecules using 4 electrons from cytochrome c in the IMS and 4 protons from the mitochondrial matrix. This chain is Cytochrome c oxidase subunit 3 (COX3), found in Mycosarcoma maydis (Corn smut fungus).